We begin with the raw amino-acid sequence, 966 residues long: Muscular LMNA-interacting protein (966 aa).

Ser-129 is modified (phosphoserine). 8 disordered regions span residues 132–154, 182–207, 303–337, 354–388, 434–562, 597–684, 785–837, and 929–966; these read EDEA…IATR, SHPE…TSEQ, LAPE…SLRS, PSPK…LKSP, IKQT…TRPS, KRTC…TPSL, SMHS…SQLT, and SLRD…DSKE. A required for interaction with ISL1 region spans residues 144 to 810; sequence PPGATGNIAT…GSETIKTPTT (667 aa). 2 stretches are compositionally biased toward polar residues: residues 195-207 and 325-337; these read KHGQ…TSEQ and TSPS…SLRS. Composition is skewed to low complexity over residues 354–387, 437–455, and 478–497; these read PSPK…GLKS, TPST…TGST, and PLSQ…SYAA. Ser-486 carries the phosphoserine modification. Positions 507 to 521 are enriched in polar residues; it reads TLRSSTTPPQSQTDL. 2 stretches are compositionally biased toward basic and acidic residues: residues 542–555 and 597–607; these read GRKD…EKNR and KRTCSQRHSDQ. Polar residues-rich tracts occupy residues 639–649 and 657–684; these read SSLTQALQRSP and GSAT…TPSL. The span at 785 to 797 shows a compositional bias: low complexity; the sequence is SMHSSDSPSRPSQ. At Ser-791 the chain carries Phosphoserine. Residues 798-810 are compositionally biased toward polar residues; sequence TMLGSETIKTPTT. The segment covering 825–834 has biased composition (low complexity); it reads SSSSSTTSES. Residues 937 to 946 show a composition bias toward polar residues; the sequence is SPTLLSQDTY. The segment covering 957 to 966 has biased composition (basic and acidic residues); it reads PEHDTLDSKE.

In terms of assembly, directly interacts with LMNA. Interacts with ISL1 (via N-terminal domain); the interaction represses ISL1 transactivator activity. Interactions of ISL1 with MLIP1 and GCN5/KAT2A may be mutually exclusive. As to expression, expressed in cardiomyoctes. Expression is highly reduced in hypertrophic cardiomyocytes.

It is found in the nucleus. The protein resides in the nucleus envelope. It localises to the PML body. The protein localises to the cytoplasm. Its subcellular location is the cytosol. It is found in the cell membrane. The protein resides in the sarcolemma. In terms of biological role, required for myoblast differentiation into myotubes, possibly acting as a transcriptional regulator of the myogenic program. Required for cardiac adaptation to stress through integrated regulation of the AKT/mTOR pathways and FOXO1. Regulates cardiac homeostasis and plays a role in the protection against cardiac hypertrophy. Binds chromatin. May act as a transcriptional cofactor for ISL1, repressing its transcriptional activity. May also repress MYOCD transcriptional activity. This is Muscular LMNA-interacting protein from Rattus norvegicus (Rat).